A 459-amino-acid chain; its full sequence is Phosphomethylpyrimidine synthase (459 aa).

Substrate is bound by residues Asn-80, Met-109, Tyr-139, His-175, 195-197 (SRG), 236-239 (DSLR), and Glu-275. A Zn(2+)-binding site is contributed by His-279. Tyr-302 provides a ligand contact to substrate. His-343 lines the Zn(2+) pocket. Cys-423, Cys-426, and Cys-431 together coordinate [4Fe-4S] cluster.

Belongs to the ThiC family. The cofactor is [4Fe-4S] cluster.

It carries out the reaction 5-amino-1-(5-phospho-beta-D-ribosyl)imidazole + S-adenosyl-L-methionine = 4-amino-2-methyl-5-(phosphooxymethyl)pyrimidine + CO + 5'-deoxyadenosine + formate + L-methionine + 3 H(+). It functions in the pathway cofactor biosynthesis; thiamine diphosphate biosynthesis. Functionally, catalyzes the synthesis of the hydroxymethylpyrimidine phosphate (HMP-P) moiety of thiamine from aminoimidazole ribotide (AIR) in a radical S-adenosyl-L-methionine (SAM)-dependent reaction. The sequence is that of Phosphomethylpyrimidine synthase from Synechocystis sp. (strain ATCC 27184 / PCC 6803 / Kazusa).